Here is an 81-residue protein sequence, read N- to C-terminus: Small serum protein 4 (81 aa).

The N-terminal stretch at 1 to 19 is a signal peptide; it reads MKVFFILIIFSFTLATCQG. 3 disulfides stabilise this stretch: C21–C74, C41–C66, and C64–C73.

The protein belongs to the beta-microseminoprotein family.

It localises to the secreted. Functionally, shows an slight inhibitory effect toward the metalloproteinase brevilysin H6, but does not inhibit the metalloproteinases thermolysin, HR1A and HR1B. The polypeptide is Small serum protein 4 (Protobothrops flavoviridis (Habu)).